Consider the following 252-residue polypeptide: 5-oxoprolinase subunit A (252 aa).

It belongs to the LamB/PxpA family. In terms of assembly, forms a complex composed of PxpA, PxpB and PxpC.

The enzyme catalyses 5-oxo-L-proline + ATP + 2 H2O = L-glutamate + ADP + phosphate + H(+). Its function is as follows. Catalyzes the cleavage of 5-oxoproline to form L-glutamate coupled to the hydrolysis of ATP to ADP and inorganic phosphate. In Staphylococcus carnosus (strain TM300), this protein is 5-oxoprolinase subunit A.